Here is a 263-residue protein sequence, read N- to C-terminus: Aquaporin Lacbi1:233199 (263 aa).

Topologically, residues 1 to 17 (MFTLAHHRHAIRKPMAE) are cytoplasmic. Residues 18–38 (FFGVALLVIFGAGAACQVVLS) traverse the membrane as a helical segment. The Extracellular segment spans residues 39 to 44 (TNPNSF). The chain crosses the membrane as a helical span at residues 45–65 (LSINFGWAIGIAMGAWISGSI). The Cytoplasmic segment spans residues 66–88 (SGGHINPAITIAMATYRGFPWRE). The NPA 1 signature appears at 71 to 73 (NPA). A helical transmembrane segment spans residues 89–109 (VPSYILAQVLGGVVGAALVYA). Residues 110–143 (NYIHAIDVFEGGRHIRTQATASLFATYALPYMTQ) lie on the Extracellular side of the membrane. A helical membrane pass occupies residues 144–164 (VSCFFSEFLATAVLAMMVLAL). The Cytoplasmic segment spans residues 165 to 174 (TDNRNGAPTN). A helical membrane pass occupies residues 175 to 195 (GLSPFALFVLFIGLGASLGME). The Extracellular portion of the chain corresponds to 196-227 (TAYALNPARDFGPRLFLAMAGYGKALFNYRSQ). An NPA 2 motif is present at residues 201–203 (NPA). A helical transmembrane segment spans residues 228 to 248 (YWLWAPIIAPVLGAQAGGLLY). The Cytoplasmic segment spans residues 249–263 (DTFLYDGDDSPIKWR).

Belongs to the MIP/aquaporin (TC 1.A.8) family.

The protein resides in the membrane. It carries out the reaction H2O(in) = H2O(out). In terms of biological role, probable water channel required to facilitate the transport of water across membranes. In Laccaria bicolor (strain S238N-H82 / ATCC MYA-4686) (Bicoloured deceiver), this protein is Aquaporin Lacbi1:233199.